The primary structure comprises 565 residues: Hemagglutinin (565 aa).

Positions 1–17 are cleaved as a signal peptide; it reads MKANLLVLLCALAAADA. The Extracellular segment spans residues 18–528; that stretch reads DTICIGYHAN…VKLESMGIYQ (511 aa). Cystine bridges form between Cys-21–Cys-480, Cys-59–Cys-291, Cys-72–Cys-84, Cys-107–Cys-152, Cys-295–Cys-319, and Cys-487–Cys-491. N-linked (GlcNAc...) asparagine; by host glycosylation is found at Asn-27, Asn-28, and Asn-40. N-linked (GlcNAc...) asparagine; by host glycans are attached at residues Asn-285 and Asn-303. Residue Asn-497 is glycosylated (N-linked (GlcNAc...) asparagine; by host). The chain crosses the membrane as a helical span at residues 529 to 549; sequence ILAIYSTVASSLVLLVSLGAI. Over 550–565 the chain is Cytoplasmic; the sequence is SFWMCSNGSLQCRICI. Residues Cys-554, Cys-561, and Cys-564 are each lipidated (S-palmitoyl cysteine; by host).

It belongs to the influenza viruses hemagglutinin family. Homotrimer of disulfide-linked HA1-HA2. Interacts with human CACNA1C. Palmitoylated. In terms of processing, in natural infection, inactive HA is matured into HA1 and HA2 outside the cell by one or more trypsin-like, arginine-specific endoprotease secreted by the bronchial epithelial cells. One identified protease that may be involved in this process is secreted in lungs by club cells.

The protein localises to the virion membrane. Its subcellular location is the host apical cell membrane. Functionally, binds to sialic acid-containing receptors on the cell surface, bringing about the attachment of the virus particle to the cell. This attachment induces virion internalization either through clathrin-dependent endocytosis or through clathrin- and caveolin-independent pathway. Plays a major role in the determination of host range restriction and virulence. Class I viral fusion protein. Responsible for penetration of the virus into the cell cytoplasm by mediating the fusion of the membrane of the endocytosed virus particle with the endosomal membrane. Low pH in endosomes induces an irreversible conformational change in HA2, releasing the fusion hydrophobic peptide. Several trimers are required to form a competent fusion pore. This Aves (Human) protein is Hemagglutinin.